An 845-amino-acid polypeptide reads, in one-letter code: Protein translocase subunit SecA 1 (845 aa).

ATP contacts are provided by residues Gln-91, 109–113, and Asp-498; that span reads GEGKT. The tract at residues 795–845 is disordered; the sequence is TDFGTAQHVSAEDGKEKAKKQPIVKGDKVGRNDPCPCGSGKKYKNCHGKEE. Zn(2+) contacts are provided by Cys-829, Cys-831, Cys-840, and His-841. Basic residues predominate over residues 835–845; it reads KKYKNCHGKEE.

The protein belongs to the SecA family. Monomer and homodimer. Part of the essential Sec protein translocation apparatus which comprises SecA, SecYEG and auxiliary proteins SecDF. Other proteins may also be involved. The cofactor is Zn(2+).

The protein resides in the cell membrane. Its subcellular location is the cytoplasm. It catalyses the reaction ATP + H2O + cellular proteinSide 1 = ADP + phosphate + cellular proteinSide 2.. Functionally, part of the Sec protein translocase complex. Interacts with the SecYEG preprotein conducting channel. Has a central role in coupling the hydrolysis of ATP to the transfer of proteins into and across the cell membrane, serving as an ATP-driven molecular motor driving the stepwise translocation of polypeptide chains across the membrane. This Staphylococcus haemolyticus (strain JCSC1435) protein is Protein translocase subunit SecA 1.